A 261-amino-acid polypeptide reads, in one-letter code: GTP cyclohydrolase FolE2 (261 aa).

The protein belongs to the GTP cyclohydrolase IV family.

It carries out the reaction GTP + H2O = 7,8-dihydroneopterin 3'-triphosphate + formate + H(+). It participates in cofactor biosynthesis; 7,8-dihydroneopterin triphosphate biosynthesis; 7,8-dihydroneopterin triphosphate from GTP: step 1/1. Its function is as follows. Converts GTP to 7,8-dihydroneopterin triphosphate. The polypeptide is GTP cyclohydrolase FolE2 (Geobacter metallireducens (strain ATCC 53774 / DSM 7210 / GS-15)).